Reading from the N-terminus, the 495-residue chain is Putative lon protease homolog (495 aa).

Gly-52–Ser-59 is a binding site for ATP. Residues Tyr-471–Glu-495 form a disordered region. Positions Ser-472–Tyr-486 are enriched in polar residues.

The protein belongs to the peptidase S16 family.

The protein is Putative lon protease homolog of Thermoplasma volcanium (strain ATCC 51530 / DSM 4299 / JCM 9571 / NBRC 15438 / GSS1).